The primary structure comprises 1042 residues: Ubiquitin carboxyl-terminal hydrolase 38 (1042 aa).

A USP domain is found at 445–949 (TGLINLGNTC…TAYVLLYKKQ (505 aa)). Catalysis depends on C454, which acts as the Nucleophile. The active-site Proton acceptor is H857.

Belongs to the peptidase C19 family. As to quaternary structure, interacts with isoform 1 of FBXW7; this interaction prevents FBXW7-mediated degradation of MYC.

It is found in the cytoplasm. The protein localises to the nucleus. It catalyses the reaction Thiol-dependent hydrolysis of ester, thioester, amide, peptide and isopeptide bonds formed by the C-terminal Gly of ubiquitin (a 76-residue protein attached to proteins as an intracellular targeting signal).. Its function is as follows. Deubiquitinating enzyme that plays a role in various cellular processes, including DNA repair, cell cycle regulation, and immune response. Plays a role in the inhibition of type I interferon signaling by mediating the 'Lys-33' to 'Lys-48' ubiquitination transition of TBK1 leading to its degradation. Cleaves the ubiquitin chain from the histone demethylase LSD1/KDM1A and prevents it from degradation by the 26S proteasome, thus maintaining LSD1 protein level in cells. Plays a role in the DNA damage response by regulating the deacetylase activity of HDAC1. Mechanistically, removes the 'Lys-63'-linked ubiquitin chain promoting the deacetylase activity of HDAC1 in response to DNA damage. Also acts as a specific deubiquitinase of histone deacetylase 3/HDAC3 and cleaves its 'Lys-63'-linked ubiquitin chains to lower its histone deacetylase activity. Regulates MYC levels and cell proliferation via antagonizing ubiquitin E3 ligase FBXW7 thereby preventing MYC 'Lys-48'-linked ubiquitination and degradation. Participates in antiviral response by removing both 'Lys-48'-linked and 'Lys-63'-linked polyubiquitination of Zika virus envelope protein E. Constitutively associated with IL-33R/IL1RL1, deconjugates its 'Lys-27'-linked polyubiquitination resulting in its autophagic degradation. The chain is Ubiquitin carboxyl-terminal hydrolase 38 (Usp38) from Mus musculus (Mouse).